The following is a 131-amino-acid chain: Large ribosomal subunit protein bL17 (131 aa).

Belongs to the bacterial ribosomal protein bL17 family. In terms of assembly, part of the 50S ribosomal subunit. Contacts protein L32.

The sequence is that of Large ribosomal subunit protein bL17 from Janthinobacterium sp. (strain Marseille) (Minibacterium massiliensis).